A 373-amino-acid chain; its full sequence is UDP-3-O-acylglucosamine N-acyltransferase 2 (373 aa).

His-239 acts as the Proton acceptor in catalysis. Residues 345-373 (KTNGKSGQADAPPKVALECHGTTGDAPQG) are disordered.

The protein belongs to the transferase hexapeptide repeat family. LpxD subfamily. As to quaternary structure, homotrimer.

The enzyme catalyses a UDP-3-O-[(3R)-3-hydroxyacyl]-alpha-D-glucosamine + a (3R)-hydroxyacyl-[ACP] = a UDP-2-N,3-O-bis[(3R)-3-hydroxyacyl]-alpha-D-glucosamine + holo-[ACP] + H(+). Its pathway is bacterial outer membrane biogenesis; LPS lipid A biosynthesis. Catalyzes the N-acylation of UDP-3-O-acylglucosamine using 3-hydroxyacyl-ACP as the acyl donor. Is involved in the biosynthesis of lipid A, a phosphorylated glycolipid that anchors the lipopolysaccharide to the outer membrane of the cell. This is UDP-3-O-acylglucosamine N-acyltransferase 2 from Gloeobacter violaceus (strain ATCC 29082 / PCC 7421).